The sequence spans 199 residues: Large ribosomal subunit protein eL13B (199 aa).

Thr-144 and Thr-152 each carry phosphothreonine.

This sequence belongs to the eukaryotic ribosomal protein eL13 family. In terms of assembly, component of the large ribosomal subunit (LSU). Mature yeast ribosomes consist of a small (40S) and a large (60S) subunit. The 40S small subunit contains 1 molecule of ribosomal RNA (18S rRNA) and 33 different proteins (encoded by 57 genes). The large 60S subunit contains 3 rRNA molecules (25S, 5.8S and 5S rRNA) and 46 different proteins (encoded by 81 genes).

It is found in the cytoplasm. Component of the ribosome, a large ribonucleoprotein complex responsible for the synthesis of proteins in the cell. The small ribosomal subunit (SSU) binds messenger RNAs (mRNAs) and translates the encoded message by selecting cognate aminoacyl-transfer RNA (tRNA) molecules. The large subunit (LSU) contains the ribosomal catalytic site termed the peptidyl transferase center (PTC), which catalyzes the formation of peptide bonds, thereby polymerizing the amino acids delivered by tRNAs into a polypeptide chain. The nascent polypeptides leave the ribosome through a tunnel in the LSU and interact with protein factors that function in enzymatic processing, targeting, and the membrane insertion of nascent chains at the exit of the ribosomal tunnel. The chain is Large ribosomal subunit protein eL13B from Saccharomyces cerevisiae (strain ATCC 204508 / S288c) (Baker's yeast).